Consider the following 60-residue polypeptide: Large ribosomal subunit protein uL30 (60 aa).

It belongs to the universal ribosomal protein uL30 family. In terms of assembly, part of the 50S ribosomal subunit.

This is Large ribosomal subunit protein uL30 from Lysinibacillus sphaericus (strain C3-41).